Here is an 800-residue protein sequence, read N- to C-terminus: Nuclear poly(A) polymerase 2 (800 aa).

Residues 103 to 105 (FGS), 115 to 118 (ADID), Asp-171, Lys-232, Tyr-241, and 250 to 251 (GV) contribute to the ATP site. Positions 116, 118, and 171 each coordinate Mg(2+). 2 consecutive short sequence motifs (nuclear localization signal) follow at residues 487–494 (RRRQLPSF) and 533–540 (KRKNDDEI). Residues 497–576 (PNGYKRSRQS…SGITTSGTPQ (80 aa)) form a disordered region. Over residues 527–538 (SVERYAKRKNDD) the composition is skewed to basic and acidic residues. Positions 564–575 (PDSSGITTSGTP) are enriched in polar residues.

Belongs to the poly(A) polymerase family. Monomer. Forms a complex with cleavage and polyadenylation specificity factor (CPSF) subunits CPSF100, CPSF30, FIPS5 and PABN2. It depends on Mg(2+) as a cofactor. Requires Mn(2+) as cofactor. Mostly expressed in flowers (highly in the style, receptacle and pedicel, but weakly in the vasculature of sepals) and hypocotyls, and, to a lower extent, in roots and stems. Barely detected in leaves (petioles and vascular system).

The protein localises to the nucleus. Its subcellular location is the cytoplasm. The catalysed reaction is RNA(n) + ATP = RNA(n)-3'-adenine ribonucleotide + diphosphate. Functionally, essential protein. Polymerase that creates the 3'-poly(A) tail of mRNA's. Also required for the endoribonucleolytic cleavage reaction at some polyadenylation sites. May acquire specificity through interaction with a cleavage and polyadenylation specificity factor (CPSF) at its C-terminus. Mediates the polyadenylation of RNAs that are associated with polynucleotide phosphorylase (e.g. PNP1). In Arabidopsis thaliana (Mouse-ear cress), this protein is Nuclear poly(A) polymerase 2.